A 381-amino-acid chain; its full sequence is Succinyl-diaminopimelate desuccinylase (381 aa).

Residue H69 coordinates Zn(2+). D71 is a catalytic residue. Position 103 (D103) interacts with Zn(2+). The Proton acceptor role is filled by E137. Positions 138, 166, and 355 each coordinate Zn(2+).

This sequence belongs to the peptidase M20A family. DapE subfamily. Homodimer. The cofactor is Zn(2+). Co(2+) serves as cofactor.

The enzyme catalyses N-succinyl-(2S,6S)-2,6-diaminopimelate + H2O = (2S,6S)-2,6-diaminopimelate + succinate. Its pathway is amino-acid biosynthesis; L-lysine biosynthesis via DAP pathway; LL-2,6-diaminopimelate from (S)-tetrahydrodipicolinate (succinylase route): step 3/3. In terms of biological role, catalyzes the hydrolysis of N-succinyl-L,L-diaminopimelic acid (SDAP), forming succinate and LL-2,6-diaminopimelate (DAP), an intermediate involved in the bacterial biosynthesis of lysine and meso-diaminopimelic acid, an essential component of bacterial cell walls. This chain is Succinyl-diaminopimelate desuccinylase, found in Rickettsia massiliae (strain Mtu5).